The sequence spans 129 residues: Large ribosomal subunit protein uL22 (129 aa).

This sequence belongs to the universal ribosomal protein uL22 family. Part of the 50S ribosomal subunit.

Functionally, this protein binds specifically to 23S rRNA; its binding is stimulated by other ribosomal proteins, e.g. L4, L17, and L20. It is important during the early stages of 50S assembly. It makes multiple contacts with different domains of the 23S rRNA in the assembled 50S subunit and ribosome. In terms of biological role, the globular domain of the protein is located near the polypeptide exit tunnel on the outside of the subunit, while an extended beta-hairpin is found that lines the wall of the exit tunnel in the center of the 70S ribosome. The protein is Large ribosomal subunit protein uL22 of Onion yellows phytoplasma (strain OY-M).